Consider the following 376-residue polypeptide: Peroxisomal membrane protein PEX27 (376 aa).

In terms of assembly, homooligomer. Interacts with PEX25 and PEX34.

The protein resides in the peroxisome membrane. Its function is as follows. Required for regulation of peroxisome size and number. Also promotes peroxisome division and biogenesis. The sequence is that of Peroxisomal membrane protein PEX27 (PEX27) from Saccharomyces cerevisiae (strain ATCC 204508 / S288c) (Baker's yeast).